A 463-amino-acid polypeptide reads, in one-letter code: Zinc finger protein PLAGL1 (463 aa).

7 consecutive C2H2-type zinc fingers follow at residues 4-26, 32-56, 62-84, 91-113, 120-142, 156-178, and 184-207; these read YPCQ…NYSH, YKCL…MATH, HQCA…LQTH, FGCE…LALH, LTCG…LKAH, HQCD…LVVH, and FLCQ…KKTH. Residues 285 to 310 form a disordered region; that stretch reads LHPVAPPTSPPQPLQNHKYNTSSTSY. The span at 287–297 shows a compositional bias: pro residues; that stretch reads PVAPPTSPPQP. Residues 298–310 show a composition bias toward polar residues; it reads LQNHKYNTSSTSY.

It belongs to the krueppel C2H2-type zinc-finger protein family. In terms of assembly, interacts with THRSP.

It localises to the nucleus. In terms of biological role, acts as a transcriptional activator. Involved in the transcriptional regulation of type 1 receptor for pituitary adenylate cyclase-activating polypeptide. The sequence is that of Zinc finger protein PLAGL1 (PLAGL1) from Sus scrofa (Pig).